Reading from the N-terminus, the 810-residue chain is Oligoxyloglucan-reducing end-specific xyloglucanase (810 aa).

An N-terminal signal peptide occupies residues 1 to 28 (MRAKNGPGSWLALTAIATSLNTLALAAA). N-linked (GlcNAc...) asparagine glycosylation occurs at Asn-32. Asp-66 acts as the Nucleophile in catalysis. Residues 126–135 (FVSQDRGATF) form a BNR 1 repeat. Asn-188 is a glycosylation site (N-linked (GlcNAc...) asparagine). Residues 226–236 (YVTRDSGESWE) form a BNR 2 repeat. N-linked (GlcNAc...) asparagine glycans are attached at residues Asn-298, Asn-312, and Asn-321. One copy of the BNR 3 repeat lies at 359–369 (YLSHDGGKSWK). The N-linked (GlcNAc...) asparagine glycan is linked to Asn-455. Asp-498 serves as the catalytic Proton donor. An N-linked (GlcNAc...) asparagine glycan is attached at Asn-544. One copy of the BNR 4 repeat lies at 554 to 564 (YSADGGSSWTK). N-linked (GlcNAc...) asparagine glycosylation is found at Asn-573 and Asn-612. A BNR 5 repeat occupies 617–626 (YVTTDLGQTW). Asn-638 is a glycosylation site (N-linked (GlcNAc...) asparagine). 3 BNR repeats span residues 658–667 (YLSRDGGLSY), 705–716 (YHTRNFGKKWTK), and 759–769 (YRSDDNGKTWV).

Belongs to the glycosyl hydrolase 74 family.

Its subcellular location is the secreted. The catalysed reaction is Hydrolysis of cellobiose from the reducing end of xyloglucans consisting of a beta-(1-&gt;4)-linked glucan carrying alpha-D-xylosyl groups on O-6 of the glucose residues. To be a substrate, the first residue must be unsubstituted, the second residue may bear a xylosyl group, whether further glycosylated or not, and the third residue, which becomes the new terminus by the action of the enzyme, is preferably xylosylated, but this xylose residue must not be further substituted.. In terms of biological role, oligoxyloglucan-reducing end-specific xyloglucanase involved in degradation of xyloglucans. Releases the first two glycosyl segments from oligoxyloglucans. Active against cotton xyloglucan, tamarind xyloglucan and tamarind xyloglucan oligomers. This is Oligoxyloglucan-reducing end-specific xyloglucanase (xgcA) from Emericella nidulans (strain FGSC A4 / ATCC 38163 / CBS 112.46 / NRRL 194 / M139) (Aspergillus nidulans).